A 443-amino-acid chain; its full sequence is MVRIGSSLLLATLAATTVSAASDPPKCSQDSHCPEEWPCCSLYGQCGTGAYCLGGCDPLMSFSLDSCTPEPICQGKTYKDWSNLDNLASNTKYLGDASKSDWVYSGYPKVEDGNLLLTMPKNSVGTLIANNHYIWYGKITAKIKSSRGAGVVTGFILLSDTKDEIDYEFVGADLTNVQTNYYFQGVLDYNHGGNASVSGGNTFGDWHEYTIDWKPDAITWSVDGEVKRTLKKESTYNETSKQYMYPQTPSRMQLSLWPAGQASNAPGTIAWAGGEIDWDSEDIKDPGYYYATFGEITVECYDPPSGADIKGTKAYIFKDKAGLESSVQITNNKTVLASFGATGLDMDVGASSSASGSANKTSSSANTVPSGNGGSGNEPGNSHSGSSGSGTSTSDGSGSSTGFSQGSETSASSNKNAAPSQNERVLNGSFFAVLVAVVALVTL.

The first 20 residues, 1–20 (MVRIGSSLLLATLAATTVSA), serve as a signal peptide directing secretion. A GH16 domain is found at 21-306 (ASDPPKCSQD…TVECYDPPSG (286 aa)). Cysteines 56 and 67 form a disulfide. Residue glutamate 164 is the Nucleophile of the active site. Glutamate 168 functions as the Proton donor in the catalytic mechanism. Glutamate 168 provides a ligand contact to chitin. 2 N-linked (GlcNAc...) asparagine glycosylation sites follow: asparagine 194 and asparagine 237. Chitin contacts are provided by tryptophan 257 and threonine 268. Residues asparagine 332 and asparagine 359 are each glycosylated (N-linked (GlcNAc...) asparagine). 2 stretches are compositionally biased toward low complexity: residues 350–367 (ASSS…SANT) and 378–410 (EPGN…SETS). Residues 350–420 (ASSSASGSAN…ASSNKNAAPS (71 aa)) are disordered. The span at 411-420 (ASSNKNAAPS) shows a compositional bias: polar residues. Asparagine 416 is lipidated: GPI-like-anchor amidated asparagine. A propeptide spans 417-443 (AAPSQNERVLNGSFFAVLVAVVALVTL) (removed in mature form). A glycan (N-linked (GlcNAc...) asparagine) is linked at asparagine 427.

This sequence belongs to the glycosyl hydrolase 16 family. CRH1 subfamily. In terms of processing, the GPI-like anchor contains a phosphoceramide lipid group. The anchor position has not been determined.

The protein resides in the cell membrane. It localises to the secreted. It is found in the cell wall. The enzyme catalyses Random endo-hydrolysis of N-acetyl-beta-D-glucosaminide (1-&gt;4)-beta-linkages in chitin and chitodextrins.. Its function is as follows. Dual chitinase/transglycosylase that plays a role in cell wall architecture. Chitinase and transglycosylase activities are coupled. Required for the polysaccharide cross-linking at the septa and the cell wall. More specifically, transfers chitin to 1,6-beta-glucan in the cell wall. This chain is Crh-like protein 2, found in Aspergillus fumigatus (strain ATCC MYA-4609 / CBS 101355 / FGSC A1100 / Af293) (Neosartorya fumigata).